The primary structure comprises 275 residues: NAD kinase (275 aa).

The Proton acceptor role is filled by aspartate 68. NAD(+) is bound by residues 68-69, arginine 73, 136-137, lysine 147, arginine 164, aspartate 166, 177-182, alanine 201, and glutamine 236; these read DG, NE, and TAYAMS.

This sequence belongs to the NAD kinase family. Requires a divalent metal cation as cofactor.

The protein localises to the cytoplasm. The catalysed reaction is NAD(+) + ATP = ADP + NADP(+) + H(+). In terms of biological role, involved in the regulation of the intracellular balance of NAD and NADP, and is a key enzyme in the biosynthesis of NADP. Catalyzes specifically the phosphorylation on 2'-hydroxyl of the adenosine moiety of NAD to yield NADP. This chain is NAD kinase, found in Methanosarcina barkeri (strain Fusaro / DSM 804).